Here is a 487-residue protein sequence, read N- to C-terminus: Acetyl-coenzyme A carboxylase carboxyl transferase subunit beta, chloroplastic (487 aa).

Residues 180 to 201 form a disordered region; the sequence is SRNSSENEGSSKRTRTKGSDLT. A CoA carboxyltransferase N-terminal domain is found at 218-487; that stretch reads LWVQCENCYG…PLNQKSSKIK (270 aa). Residues C222, C225, C241, and C244 each contribute to the Zn(2+) site. The C4-type zinc-finger motif lies at 222–244; sequence CENCYGLNYKKFLKSKMNICEQC.

Belongs to the AccD/PCCB family. In terms of assembly, acetyl-CoA carboxylase is a heterohexamer composed of biotin carboxyl carrier protein, biotin carboxylase and 2 subunits each of ACCase subunit alpha and ACCase plastid-coded subunit beta (accD). The cofactor is Zn(2+).

It is found in the plastid. It localises to the chloroplast stroma. It carries out the reaction N(6)-carboxybiotinyl-L-lysyl-[protein] + acetyl-CoA = N(6)-biotinyl-L-lysyl-[protein] + malonyl-CoA. The protein operates within lipid metabolism; malonyl-CoA biosynthesis; malonyl-CoA from acetyl-CoA: step 1/1. Functionally, component of the acetyl coenzyme A carboxylase (ACC) complex. Biotin carboxylase (BC) catalyzes the carboxylation of biotin on its carrier protein (BCCP) and then the CO(2) group is transferred by the transcarboxylase to acetyl-CoA to form malonyl-CoA. This is Acetyl-coenzyme A carboxylase carboxyl transferase subunit beta, chloroplastic from Atropa belladonna (Belladonna).